The sequence spans 470 residues: AAA-ATPase At5g17730 (470 aa).

Residues 1–18 (MFSLRNLPSLAPFVSAYA) form the signal peptide. 252-259 (GPPGTGKT) lines the ATP pocket.

It belongs to the AAA ATPase family. BCS1 subfamily. The cofactor is Mg(2+).

It carries out the reaction ATP + H2O = ADP + phosphate + H(+). The protein is AAA-ATPase At5g17730 of Arabidopsis thaliana (Mouse-ear cress).